A 213-amino-acid polypeptide reads, in one-letter code: N-(5'-phosphoribosyl)anthranilate isomerase (213 aa).

It belongs to the TrpF family.

It catalyses the reaction N-(5-phospho-beta-D-ribosyl)anthranilate = 1-(2-carboxyphenylamino)-1-deoxy-D-ribulose 5-phosphate. The protein operates within amino-acid biosynthesis; L-tryptophan biosynthesis; L-tryptophan from chorismate: step 3/5. In Methylibium petroleiphilum (strain ATCC BAA-1232 / LMG 22953 / PM1), this protein is N-(5'-phosphoribosyl)anthranilate isomerase.